Consider the following 255-residue polypeptide: tRNA (guanine-N(1)-)-methyltransferase (255 aa).

S-adenosyl-L-methionine contacts are provided by residues glycine 113 and 133–138 (IGDYVL).

The protein belongs to the RNA methyltransferase TrmD family. In terms of assembly, homodimer.

The protein localises to the cytoplasm. The catalysed reaction is guanosine(37) in tRNA + S-adenosyl-L-methionine = N(1)-methylguanosine(37) in tRNA + S-adenosyl-L-homocysteine + H(+). Its function is as follows. Specifically methylates guanosine-37 in various tRNAs. This chain is tRNA (guanine-N(1)-)-methyltransferase, found in Serratia proteamaculans (strain 568).